The following is a 196-amino-acid chain: Fucoxanthin-chlorophyll a-c binding protein A, chloroplastic (196 aa).

A chloroplast-targeting transit peptide spans 1-31 (MKFAVFASLLASRAAFAPAQQSARTSVATNM). A run of 3 helical transmembrane segments spans residues 73 to 94 (ICML…PGDI), 114 to 134 (VPGA…IAVM), and 174 to 196 (GRAA…SILP).

This sequence belongs to the fucoxanthin chlorophyll protein family. The LHC complex of chromophytic algae is composed of fucoxanthin, chlorophyll A and C bound non-covalently by fucoxanthin chlorophyll proteins (FCPs). The ratio of the pigments in LHC; fucoxanthin: chlorophyll C: chlorophyll A; (0.6-1): (0.1-0.3): (1).

The protein localises to the plastid. It is found in the chloroplast thylakoid membrane. Its function is as follows. The light-harvesting complex (LHC) functions as a light receptor, it captures and delivers excitation energy to photosystems with which it is closely associated. Energy is transferred from the carotenoid and chlorophyll C (or B) to chlorophyll A and the photosynthetic reaction centers where it is used to synthesize ATP and reducing power. This chain is Fucoxanthin-chlorophyll a-c binding protein A, chloroplastic (FCPA), found in Phaeodactylum tricornutum (Diatom).